Reading from the N-terminus, the 176-residue chain is MGIAVEARKVYPYPFQHVVTSYLNKYPTPLEKHVLSVKTVEEKTDPATGVVYRKRIATCNNVIPSFLRRCSILKVSNVYLEEESWLDMKTRVMTLETHCLTWAQYATMKEESVYKECTENSNWTEFTQKGTITITGAGFLNRVLETFAQTFLSHGVKKSISIMETILRERCGCPFS.

Positions 1 to 175 constitute a PRELI/MSF1 domain; it reads MGIAVEARKV…ILRERCGCPF (175 aa).

The sequence is that of PRELI domain-containing protein 2 (prelid2) from Xenopus tropicalis (Western clawed frog).